The following is a 154-amino-acid chain: Myoglobin (154 aa).

In terms of domain architecture, Globin spans 2 to 148 (GLSDGEWQLV…FRNDIAAKYK (147 aa)). S4 carries the post-translational modification Phosphoserine. H65 lines the nitrite pocket. H65 serves as a coordination point for O2. T68 carries the phosphothreonine modification. Heme b is bound at residue H94.

Belongs to the globin family. In terms of assembly, monomeric.

The protein resides in the cytoplasm. It localises to the sarcoplasm. It carries out the reaction Fe(III)-heme b-[protein] + nitric oxide + H2O = Fe(II)-heme b-[protein] + nitrite + 2 H(+). The enzyme catalyses H2O2 + AH2 = A + 2 H2O. Monomeric heme protein which primary function is to store oxygen and facilitate its diffusion within muscle tissues. Reversibly binds oxygen through a pentacoordinated heme iron and enables its timely and efficient release as needed during periods of heightened demand. Depending on the oxidative conditions of tissues and cells, and in addition to its ability to bind oxygen, it also has a nitrite reductase activity whereby it regulates the production of bioactive nitric oxide. Under stress conditions, like hypoxia and anoxia, it also protects cells against reactive oxygen species thanks to its pseudoperoxidase activity. The polypeptide is Myoglobin (MB) (Tupaia glis (Common tree shrew)).